A 120-amino-acid chain; its full sequence is Immunoglobulin kappa variable 2D-26 (120 aa).

The signal sequence occupies residues 1–20 (MRLPAQLLGLLMLWVPGSSA). The interval 21–43 (EIVMTQTPLSLSITPGEQASMSC) is framework-1. The Ig-like domain maps to 21 to 120 (EIVMTQTPLS…YYCMQDAQDP (100 aa)). A disulfide bridge links C43 with C113. Positions 44–59 (RSSQSLLHSDGYTYLY) are complementarity-determining-1. The tract at residues 60-74 (WFLQKARPVSTLLIY) is framework-2. The complementarity-determining-2 stretch occupies residues 75 to 81 (EVSNRFS). The interval 82 to 113 (GVPDRFSGSGSGTDFTLKISRVEAEDFGVYYC) is framework-3. The interval 114–120 (MQDAQDP) is complementarity-determining-3.

In terms of assembly, immunoglobulins are composed of two identical heavy chains and two identical light chains; disulfide-linked.

The protein resides in the secreted. It is found in the cell membrane. Functionally, v region of the variable domain of immunoglobulin light chains that participates in the antigen recognition. Immunoglobulins, also known as antibodies, are membrane-bound or secreted glycoproteins produced by B lymphocytes. In the recognition phase of humoral immunity, the membrane-bound immunoglobulins serve as receptors which, upon binding of a specific antigen, trigger the clonal expansion and differentiation of B lymphocytes into immunoglobulins-secreting plasma cells. Secreted immunoglobulins mediate the effector phase of humoral immunity, which results in the elimination of bound antigens. The antigen binding site is formed by the variable domain of one heavy chain, together with that of its associated light chain. Thus, each immunoglobulin has two antigen binding sites with remarkable affinity for a particular antigen. The variable domains are assembled by a process called V-(D)-J rearrangement and can then be subjected to somatic hypermutations which, after exposure to antigen and selection, allow affinity maturation for a particular antigen. The polypeptide is Immunoglobulin kappa variable 2D-26 (Homo sapiens (Human)).